The primary structure comprises 73 residues: Translation initiation factor IF-1 (73 aa).

Residues 1 to 73 enclose the S1-like domain; sequence MANKEELIEF…TKGRITYRAR (73 aa).

The protein belongs to the IF-1 family. Component of the 30S ribosomal translation pre-initiation complex which assembles on the 30S ribosome in the order IF-2 and IF-3, IF-1 and N-formylmethionyl-tRNA(fMet); mRNA recruitment can occur at any time during PIC assembly.

It is found in the cytoplasm. In terms of biological role, one of the essential components for the initiation of protein synthesis. Stabilizes the binding of IF-2 and IF-3 on the 30S subunit to which N-formylmethionyl-tRNA(fMet) subsequently binds. Helps modulate mRNA selection, yielding the 30S pre-initiation complex (PIC). Upon addition of the 50S ribosomal subunit IF-1, IF-2 and IF-3 are released leaving the mature 70S translation initiation complex. The sequence is that of Translation initiation factor IF-1 from Acinetobacter baumannii (strain ATCC 17978 / DSM 105126 / CIP 53.77 / LMG 1025 / NCDC KC755 / 5377).